Here is a 253-residue protein sequence, read N- to C-terminus: Retinoic acid early-inducible protein 1-beta (253 aa).

The N-terminal stretch at M1 to G28 is a signal peptide. A disulfide bridge links C37 with C56. N-linked (GlcNAc...) asparagine glycans are attached at residues N38, N70, N83, N143, and N156. A disulfide bond links C90 and C190. The disordered stretch occupies residues L198–T230. The segment covering S211–S221 has biased composition (low complexity). S229 carries GPI-anchor amidated serine lipidation. A propeptide spans T230 to M253 (removed in mature form).

It belongs to the NKG2D ligand family. In terms of processing, glycosylated. In terms of tissue distribution, expressed predominantly in embryonic brain.

The protein localises to the cell membrane. Functionally, acts as a ligand for KLRK1. The sequence is that of Retinoic acid early-inducible protein 1-beta (Raet1b) from Mus musculus (Mouse).